Here is a 160-residue protein sequence, read N- to C-terminus: Transcriptional repressor NrdR (160 aa).

A zinc finger lies at 3 to 34 (CPRCHHNNSRVIDSRQADDGRAIRRRRECENC). Residues 49–139 (LLVIKKNGDR…VYRQFKDMSV (91 aa)) form the ATP-cone domain.

The protein belongs to the NrdR family. The cofactor is Zn(2+).

Its function is as follows. Negatively regulates transcription of bacterial ribonucleotide reductase nrd genes and operons by binding to NrdR-boxes. The polypeptide is Transcriptional repressor NrdR (Enterococcus faecalis (strain ATCC 700802 / V583)).